The sequence spans 206 residues: Dephospho-CoA kinase (206 aa).

Residues 4–200 enclose the DPCK domain; that stretch reads TVALTGGIGS…ASYLKLASQF (197 aa). 12-17 provides a ligand contact to ATP; the sequence is GSGKST.

The protein belongs to the CoaE family.

The protein localises to the cytoplasm. The catalysed reaction is 3'-dephospho-CoA + ATP = ADP + CoA + H(+). The protein operates within cofactor biosynthesis; coenzyme A biosynthesis; CoA from (R)-pantothenate: step 5/5. Its function is as follows. Catalyzes the phosphorylation of the 3'-hydroxyl group of dephosphocoenzyme A to form coenzyme A. The polypeptide is Dephospho-CoA kinase (Salmonella typhimurium (strain LT2 / SGSC1412 / ATCC 700720)).